Here is a 191-residue protein sequence, read N- to C-terminus: MLSALGGNLSNARQSIAQVLNFALVLSTAFMLWKGVSIASNSSSPIVVVLSGSMEPAFQRGDLLFLWNRAERTEVGEIVVYNVRGRDIPIVHRVVRSYTEEDKKLKAKNKKAGLPTVAPQKLLTKGDNNLADDTELYARGQDFLDRKEDIIGSVRGYIPGVGYVTIMLSEHPWLKTVLLGVMGLMVILQRE.

The Cytoplasmic segment spans residues 1 to 18 (MLSALGGNLSNARQSIAQ). Residues 19 to 39 (VLNFALVLSTAFMLWKGVSIA) form a helical; Signal-anchor for type II membrane protein membrane-spanning segment. Topologically, residues 40-191 (SNSSSPIVVV…MGLMVILQRE (152 aa)) are lumenal. Residue Asn-41 is glycosylated (N-linked (GlcNAc...) asparagine). Catalysis depends on charge relay system residues Ser-53, His-92, and Asp-133. The interval 177–188 (VLLGVMGLMVIL) is C-terminal short (CTS) helix.

Belongs to the peptidase S26B family. As to quaternary structure, component of the signal peptidase complex (SPC) composed of a catalytic subunit SEC11 and three accessory subunits SPC1, SPC2 and SPC3. The complex induces a local thinning of the ER membrane which is used to measure the length of the signal peptide (SP) h-region of protein substrates. This ensures the selectivity of the complex towards h-regions shorter than 18-20 amino acids. SPC associates with the translocon complex.

It is found in the endoplasmic reticulum membrane. It catalyses the reaction Cleavage of hydrophobic, N-terminal signal or leader sequences from secreted and periplasmic proteins.. Catalytic component of the signal peptidase complex (SPC) which catalyzes the cleavage of N-terminal signal sequences from nascent proteins as they are translocated into the lumen of the endoplasmic reticulum. Specifically cleaves N-terminal signal peptides that contain a hydrophobic alpha-helix (h-region) shorter than 18-20 amino acids. The protein is Signal peptidase complex catalytic subunit sec11 (sec11) of Talaromyces marneffei (strain ATCC 18224 / CBS 334.59 / QM 7333) (Penicillium marneffei).